We begin with the raw amino-acid sequence, 258 residues long: UPF0758 protein BamMC406_2419 (258 aa).

The interval Cys13–Pro42 is disordered. Over residues Arg31–Pro42 the composition is skewed to basic residues. The region spanning Gln136 to Leu258 is the MPN domain. The Zn(2+) site is built by His207, His209, and Asp220. Positions His207–Asp220 match the JAMM motif motif.

Belongs to the UPF0758 family.

The sequence is that of UPF0758 protein BamMC406_2419 from Burkholderia ambifaria (strain MC40-6).